The chain runs to 498 residues: MSALLTAAGLLFLGMLQAFPTDRPLKTTCAGDLSHYPGEAARNCCYQCPSGLSPTQPCPRGPAHCRKQCAPDYYVNEDGKCTACVTCLPGLVEKAPCSGNSPRICECQPGMHCCTPAVNSCARCKLHCSGEEVVKSPGTAKKDTICELPSSGSGPNCSNPGDRKTLTSHATPQAMPTLESPANDSARSLLPMRVTNLVQEDATELVKVPESSSSKAREPSPDPGNAEKNMTLELPSPGTLPDISTSENSKEPASTASTLSLVVDAWTSSRMQPTSPLSTGTPFLDPGPVLFWVAMVVLLVGSGSFLLCYWKACRRRFQQKFHLDYLVQTFQPKMEQTDSCPTEKLTQPQRSGSVTDPSTGHKLSPVSPPPAVETCASVGATYLENLPLLDDSPAGNPFSPREPPEPRVSTEHTNNRIEKIYIMKADTVIVGSVKTEVPEGRAPAGSTESELEAELEVDHAPHYPEQETEPPLGSCTEVMFSVEEGGKEDHGPTTVSEK.

An N-terminal signal peptide occupies residues 1–18 (MSALLTAAGLLFLGMLQA). At 19–287 (FPTDRPLKTT…STGTPFLDPG (269 aa)) the chain is on the extracellular side. TNFR-Cys repeat units lie at residues 68–105 (QCAP…PRIC) and 106–146 (ECQP…DTIC). 5 disulfides stabilise this stretch: C69–C81, C84–C97, C87–C105, C107–C121, and C128–C146. A disordered region spans residues 142–168 (KDTICELPSSGSGPNCSNPGDRKTLTS). Positions 149-160 (PSSGSGPNCSNP) are enriched in low complexity. 3 N-linked (GlcNAc...) asparagine glycosylation sites follow: N156, N183, and N229. The tract at residues 204 to 256 (ELVKVPESSSSKAREPSPDPGNAEKNMTLELPSPGTLPDISTSENSKEPASTA) is disordered. A compositionally biased stretch (polar residues) spans 242–256 (DISTSENSKEPASTA). A helical transmembrane segment spans residues 288–308 (PVLFWVAMVVLLVGSGSFLLC). Residues 309 to 498 (YWKACRRRFQ…DHGPTTVSEK (190 aa)) lie on the Cytoplasmic side of the membrane. Positions 338 to 358 (DSCPTEKLTQPQRSGSVTDPS) are enriched in polar residues. 3 disordered regions span residues 338 to 370 (DSCP…SPPP), 389 to 411 (LDDS…VSTE), and 436 to 498 (EVPE…VSEK). Residues S339 and S353 each carry the phosphoserine modification. Basic and acidic residues-rich tracts occupy residues 402–411 (EPPEPRVSTE), 456–465 (EVDHAPHYPE), and 484–498 (EGGK…VSEK).

It belongs to the TNFR8 family. In terms of assembly, interacts with TRAF1, TRAF2, TRAF3 and TRAF5. Detected in thymus and in activated splenocytes.

The protein resides in the cell membrane. Receptor for TNFSF8/CD30L. May play a role in the regulation of cellular growth and transformation of activated lymphoblasts. Regulates gene expression through activation of NF-kappa-B. The sequence is that of Tumor necrosis factor receptor superfamily member 8 from Mus musculus (Mouse).